The following is a 364-amino-acid chain: Aminomethyltransferase (364 aa).

It belongs to the GcvT family. As to quaternary structure, the glycine cleavage system is composed of four proteins: P, T, L and H.

It catalyses the reaction N(6)-[(R)-S(8)-aminomethyldihydrolipoyl]-L-lysyl-[protein] + (6S)-5,6,7,8-tetrahydrofolate = N(6)-[(R)-dihydrolipoyl]-L-lysyl-[protein] + (6R)-5,10-methylene-5,6,7,8-tetrahydrofolate + NH4(+). The glycine cleavage system catalyzes the degradation of glycine. In Shewanella baltica (strain OS195), this protein is Aminomethyltransferase.